The sequence spans 142 residues: Large ribosomal subunit protein uL13 (142 aa).

The protein belongs to the universal ribosomal protein uL13 family. As to quaternary structure, part of the 50S ribosomal subunit.

Its function is as follows. This protein is one of the early assembly proteins of the 50S ribosomal subunit, although it is not seen to bind rRNA by itself. It is important during the early stages of 50S assembly. This is Large ribosomal subunit protein uL13 from Vibrio campbellii (strain ATCC BAA-1116).